Reading from the N-terminus, the 350-residue chain is Nicotinate-nucleotide--dimethylbenzimidazole phosphoribosyltransferase (350 aa).

Catalysis depends on glutamate 316, which acts as the Proton acceptor.

It belongs to the CobT family.

It catalyses the reaction 5,6-dimethylbenzimidazole + nicotinate beta-D-ribonucleotide = alpha-ribazole 5'-phosphate + nicotinate + H(+). Its pathway is nucleoside biosynthesis; alpha-ribazole biosynthesis; alpha-ribazole from 5,6-dimethylbenzimidazole: step 1/2. Catalyzes the synthesis of alpha-ribazole-5'-phosphate from nicotinate mononucleotide (NAMN) and 5,6-dimethylbenzimidazole (DMB). The sequence is that of Nicotinate-nucleotide--dimethylbenzimidazole phosphoribosyltransferase from Pseudomonas savastanoi pv. phaseolicola (strain 1448A / Race 6) (Pseudomonas syringae pv. phaseolicola (strain 1448A / Race 6)).